Reading from the N-terminus, the 259-residue chain is Ubiquinone/menaquinone biosynthesis C-methyltransferase UbiE (259 aa).

S-adenosyl-L-methionine-binding positions include Thr-82, Asp-103, 131-132, and Ser-148; that span reads NA.

This sequence belongs to the class I-like SAM-binding methyltransferase superfamily. MenG/UbiE family.

The catalysed reaction is a 2-demethylmenaquinol + S-adenosyl-L-methionine = a menaquinol + S-adenosyl-L-homocysteine + H(+). It carries out the reaction a 2-methoxy-6-(all-trans-polyprenyl)benzene-1,4-diol + S-adenosyl-L-methionine = a 5-methoxy-2-methyl-3-(all-trans-polyprenyl)benzene-1,4-diol + S-adenosyl-L-homocysteine + H(+). The protein operates within quinol/quinone metabolism; menaquinone biosynthesis; menaquinol from 1,4-dihydroxy-2-naphthoate: step 2/2. Its pathway is cofactor biosynthesis; ubiquinone biosynthesis. Its function is as follows. Methyltransferase required for the conversion of demethylmenaquinol (DMKH2) to menaquinol (MKH2) and the conversion of 2-polyprenyl-6-methoxy-1,4-benzoquinol (DDMQH2) to 2-polyprenyl-3-methyl-6-methoxy-1,4-benzoquinol (DMQH2). The chain is Ubiquinone/menaquinone biosynthesis C-methyltransferase UbiE from Vibrio parahaemolyticus serotype O3:K6 (strain RIMD 2210633).